A 248-amino-acid chain; its full sequence is Triosephosphate isomerase (248 aa).

9–11 lines the substrate pocket; the sequence is NWK. Catalysis depends on H94, which acts as the Electrophile. The active-site Proton acceptor is E166. Substrate contacts are provided by residues G172, S212, and 233–234; that span reads GG.

This sequence belongs to the triosephosphate isomerase family. As to quaternary structure, homodimer.

The protein localises to the cytoplasm. The enzyme catalyses D-glyceraldehyde 3-phosphate = dihydroxyacetone phosphate. It functions in the pathway carbohydrate biosynthesis; gluconeogenesis. The protein operates within carbohydrate degradation; glycolysis; D-glyceraldehyde 3-phosphate from glycerone phosphate: step 1/1. Its function is as follows. Involved in the gluconeogenesis. Catalyzes stereospecifically the conversion of dihydroxyacetone phosphate (DHAP) to D-glyceraldehyde-3-phosphate (G3P). The sequence is that of Triosephosphate isomerase from Alkaliphilus oremlandii (strain OhILAs) (Clostridium oremlandii (strain OhILAs)).